A 446-amino-acid chain; its full sequence is BAG family molecular chaperone regulator 7 (446 aa).

The segment at Thr230–Lys252 is disordered. Over residues Glu239–Lys250 the composition is skewed to basic and acidic residues. Residues Pro303–Ala332 enclose the IQ domain. The 78-residue stretch at Asp330–Pro407 folds into the BAG domain. Phosphothreonine is present on Thr443.

As to quaternary structure, binds to the ATPase domain of HSP70/HSC70 chaperones. Interacts with HSP70-11/BIP2.

The protein resides in the endoplasmic reticulum. Functionally, co-chaperone that regulates diverse cellular pathways, such as programmed cell death and stress responses. Necessary for the proper maintenance of the unfolded protein response (UPR) during heat and cold tolerance. The chain is BAG family molecular chaperone regulator 7 (BAG7) from Arabidopsis thaliana (Mouse-ear cress).